We begin with the raw amino-acid sequence, 363 residues long: Uptake hydrogenase small subunit (363 aa).

Residues Met1–Ala46 constitute a signal peptide (tat-type signal). [4Fe-4S] cluster contacts are provided by Cys63, Cys66, Cys161, Cys195, His233, Cys236, Cys261, and Cys267. [3Fe-4S] cluster is bound by residues Cys276, Cys295, and Cys298.

It belongs to the [NiFe]/[NiFeSe] hydrogenase small subunit family. As to quaternary structure, heterodimer of a large and a small subunit. [4Fe-4S] cluster serves as cofactor. It depends on [3Fe-4S] cluster as a cofactor. Predicted to be exported by the Tat system. The position of the signal peptide cleavage has not been experimentally proven.

Its subcellular location is the cell membrane. It carries out the reaction H2 + A = AH2. This enzyme recycles the H(2) produced by nitrogenase to increase the production of ATP and to protect nitrogenase against inhibition or damage by O(2) under carbon- or phosphate-limited conditions. The sequence is that of Uptake hydrogenase small subunit (hupA) from Bradyrhizobium diazoefficiens (strain JCM 10833 / BCRC 13528 / IAM 13628 / NBRC 14792 / USDA 110).